An 80-amino-acid polypeptide reads, in one-letter code: FXYD domain-containing ion transport regulator 7 (80 aa).

Residues 1 to 23 (MATPTQTPTKAPEEPDPFYYDYN) lie on the Extracellular side of the membrane. O-linked (GlcNAc) threonine glycosylation is found at T3, T5, and T9. Residues 24–46 (TVQTVGMTLATILFLLGILIVIS) traverse the membrane as a helical segment. Topologically, residues 47–80 (KKVKCRKADSRSESPTCKSCKSELPSSAPGGGGV) are cytoplasmic. The segment at 54 to 80 (ADSRSESPTCKSCKSELPSSAPGGGGV) is disordered. S73 carries the post-translational modification Phosphoserine.

Belongs to the FXYD family. Regulatory subunit of the sodium/potassium-transporting ATPase which is composed of a catalytic alpha subunit, a non-catalytic beta subunit and a FXYD regulatory unit that modulates the enzymatic activity in a tissue- and isoform-specific way by changing affinities of the Na+/K+-ATPase toward Na(+), K(+) or ATP. O-glycosylated; required for stabilization and translocation to the plasma membrane.

It localises to the cell membrane. Associates with and regulates the activity of the sodium/potassium-transporting ATPase (NKA) which catalyzes the hydrolysis of ATP coupled with the exchange of Na(+) and K(+) ions across the plasma membrane. Reduces the apparent affinity for external K(+), an effect that depends on the presence of external Na(+) and voltage. Increases the apparent affinity for intracellular Na(+). The protein is FXYD domain-containing ion transport regulator 7 (FXYD7) of Homo sapiens (Human).